Reading from the N-terminus, the 96-residue chain is Co-chaperonin GroES (96 aa).

Belongs to the GroES chaperonin family. As to quaternary structure, heptamer of 7 subunits arranged in a ring. Interacts with the chaperonin GroEL.

Its subcellular location is the cytoplasm. In terms of biological role, together with the chaperonin GroEL, plays an essential role in assisting protein folding. The GroEL-GroES system forms a nano-cage that allows encapsulation of the non-native substrate proteins and provides a physical environment optimized to promote and accelerate protein folding. GroES binds to the apical surface of the GroEL ring, thereby capping the opening of the GroEL channel. This Paracidovorax citrulli (strain AAC00-1) (Acidovorax citrulli) protein is Co-chaperonin GroES.